We begin with the raw amino-acid sequence, 333 residues long: Fe(3+)-citrate import system permease protein YfmD (333 aa).

9 helical membrane passes run 13 to 33 (LMMF…NLSV), 67 to 87 (TLIG…MQAM), 97 to 117 (IFGV…ILPA), 121 to 141 (SSVI…YMIA), 151 to 171 (LALS…AIII), 201 to 221 (FSVI…VLGL), 238 to 258 (ILIS…AGPI), 279 to 299 (YVLP…DVLA), and 302 to 322 (IAFP…TPFF).

This sequence belongs to the binding-protein-dependent transport system permease family. FecCD subfamily. As to quaternary structure, the complex is composed of one ATP-binding protein (YfmF), two transmembrane proteins (YfmD and YfmE) and a solute-binding protein (YfmC).

It localises to the cell membrane. Functionally, part of the ABC transporter complex YfmCDEF involved in citrate-dependent Fe(3+) import. Involved in the translocation of the substrate across the membrane. The polypeptide is Fe(3+)-citrate import system permease protein YfmD (yfmD) (Bacillus subtilis (strain 168)).